The sequence spans 159 residues: Protein phosphatase 1 regulatory subunit 17 (159 aa).

Disordered stretches follow at residues 1 to 79 (MSTE…HIPP) and 98 to 127 (RIPK…PALH). 2 stretches are compositionally biased toward basic and acidic residues: residues 62–73 (SDQKKPRRKDTP) and 111–124 (SDME…KDTP). Residues Thr72 and Thr123 each carry the phosphothreonine; by PKG/PRKG1 modification.

Substrate for cGMP-dependent protein kinase. Phosphorylation of Thr-72 and Thr-123 is required for its phosphatase activity. Phosphorylated by PRKG1 isoform alpha. Expressed in Purkinje cells of the cerebellum, hippocampus, pons, medulla and eye.

In terms of biological role, inhibits phosphatase activities of protein phosphatase 1 (PP1) and protein phosphatase 2A (PP2A) complexes. This Mus musculus (Mouse) protein is Protein phosphatase 1 regulatory subunit 17 (Ppp1r17).